Consider the following 172-residue polypeptide: Small ribosomal subunit protein uS5 (172 aa).

An S5 DRBM domain is found at 17-80 (LREKMISVNR…DEARRKMVKV (64 aa)).

It belongs to the universal ribosomal protein uS5 family. In terms of assembly, part of the 30S ribosomal subunit. Contacts proteins S4 and S8.

Its function is as follows. With S4 and S12 plays an important role in translational accuracy. Functionally, located at the back of the 30S subunit body where it stabilizes the conformation of the head with respect to the body. The protein is Small ribosomal subunit protein uS5 of Cupriavidus metallidurans (strain ATCC 43123 / DSM 2839 / NBRC 102507 / CH34) (Ralstonia metallidurans).